The chain runs to 122 residues: Large ribosomal subunit protein uL14 (122 aa).

This sequence belongs to the universal ribosomal protein uL14 family. Part of the 50S ribosomal subunit. Forms a cluster with proteins L3 and L19. In the 70S ribosome, L14 and L19 interact and together make contacts with the 16S rRNA in bridges B5 and B8.

In terms of biological role, binds to 23S rRNA. Forms part of two intersubunit bridges in the 70S ribosome. In Pseudomonas entomophila (strain L48), this protein is Large ribosomal subunit protein uL14.